A 423-amino-acid polypeptide reads, in one-letter code: MSSILDELDWRGLIAQSTDRDALAAELAAGPMTLYSGFDPTAPSLHAGHLVPLLTLRRFQQAGHRPIVLAGGATGMIGDPRDTGERTLQTADTVADWADRIRGQLERFVEFDESPTGAIVENNLSWTGALSTIEFLRDVGKYFSVNVMLDRDTVRRRLEGEGISYTEFSYMLLQANDYVQLRKRHGCALQIGGSDQWGNIVAGVRLVRQKLGDTVHAMTTPLVTDSEGKKFGKSTGGGNLWLDPEMTTPYAWYQYFINTADADVVNYLRWFTFLEAGELGELEEATRDRPHQRTAQRRLARELTTLVHGEDATRSVEHASQALFGRGELAALDEPTLAAALREASVAELTPSGPDLITDLLVATGLSASKGAARRTIAEGGVSVNNVKIDSDEWTPQASDFLHGRWLVLRRGKRNIAGVQRVR.

Tyr-35 provides a ligand contact to L-tyrosine. A 'HIGH' region motif is present at residues 40-49; sequence PTAPSLHAGH. The L-tyrosine site is built by Tyr-170 and Gln-174. The short motif at 230-234 is the 'KMSKS' region element; that stretch reads KFGKS. An ATP-binding site is contributed by Lys-233. An S4 RNA-binding domain is found at 355–412; the sequence is DLITDLLVATGLSASKGAARRTIAEGGVSVNNVKIDSDEWTPQASDFLHGRWLVLRRG.

Belongs to the class-I aminoacyl-tRNA synthetase family. TyrS type 1 subfamily. Homodimer.

Its subcellular location is the cytoplasm. The enzyme catalyses tRNA(Tyr) + L-tyrosine + ATP = L-tyrosyl-tRNA(Tyr) + AMP + diphosphate + H(+). Functionally, catalyzes the attachment of tyrosine to tRNA(Tyr) in a two-step reaction: tyrosine is first activated by ATP to form Tyr-AMP and then transferred to the acceptor end of tRNA(Tyr). The sequence is that of Tyrosine--tRNA ligase from Mycobacterium sp. (strain JLS).